A 175-amino-acid chain; its full sequence is Calcineurin subunit B (175 aa).

EF-hand domains follow at residues 21-56 (DEIE…SANP), 60-88 (RIME…FSGR), 90-125 (SKDE…MVGS), and 131-166 (QLQQ…TEVA). 19 residues coordinate Ca(2+): aspartate 34, aspartate 36, serine 38, serine 40, glutamate 45, aspartate 66, aspartate 68, serine 70, aspartate 72, glutamate 77, aspartate 103, aspartate 105, aspartate 107, glutamate 114, aspartate 144, aspartate 146, aspartate 148, glutamine 150, and glutamate 155.

Belongs to the calcineurin regulatory subunit family. In terms of assembly, composed of a catalytic subunit (A) and a regulatory subunit (B).

Its function is as follows. Regulatory subunit of calcineurin, a calcium-dependent, calmodulin stimulated protein phosphatase. Confers calcium sensitivity. The sequence is that of Calcineurin subunit B (CNB1) from Candida glabrata (strain ATCC 2001 / BCRC 20586 / JCM 3761 / NBRC 0622 / NRRL Y-65 / CBS 138) (Yeast).